The chain runs to 210 residues: Actin-related protein 3C (210 aa).

The first 21 residues, 1-21 (MFESFNVPGLYIAVQAVLALA), serve as a signal peptide directing secretion.

It belongs to the actin family. In terms of tissue distribution, expressed in kidney, stomach, spleen, bone marrow, uterus, testis, placenta, skeletal muscle, mammary gland, lung, fetal liver, and fetal kidney, but not detected in small intestine, brain, and thymus. Expressed in low-metastatic lung adenocarcinoma cells but not in high-metastatic ones.

May play a role in the suppression of metastatic potential in lung adenoma carcinoma cells. The sequence is that of Actin-related protein 3C (ACTR3C) from Homo sapiens (Human).